The chain runs to 246 residues: 1-(5-phosphoribosyl)-5-[(5-phosphoribosylamino)methylideneamino] imidazole-4-carboxamide isomerase (246 aa).

Residue Asp-8 is the Proton acceptor of the active site. The active-site Proton donor is Asp-131.

The protein belongs to the HisA/HisF family.

The protein localises to the cytoplasm. The catalysed reaction is 1-(5-phospho-beta-D-ribosyl)-5-[(5-phospho-beta-D-ribosylamino)methylideneamino]imidazole-4-carboxamide = 5-[(5-phospho-1-deoxy-D-ribulos-1-ylimino)methylamino]-1-(5-phospho-beta-D-ribosyl)imidazole-4-carboxamide. It functions in the pathway amino-acid biosynthesis; L-histidine biosynthesis; L-histidine from 5-phospho-alpha-D-ribose 1-diphosphate: step 4/9. In Delftia acidovorans (strain DSM 14801 / SPH-1), this protein is 1-(5-phosphoribosyl)-5-[(5-phosphoribosylamino)methylideneamino] imidazole-4-carboxamide isomerase.